The primary structure comprises 388 residues: Chorismate synthase (388 aa).

NADP(+) contacts are provided by Arg-39 and Arg-45. FMN is bound by residues 132-134 (RSS), 251-252 (NA), Gly-296, 311-315 (KPIPT), and Arg-337.

As to quaternary structure, homotetramer. It depends on FMNH2 as a cofactor.

The enzyme catalyses 5-O-(1-carboxyvinyl)-3-phosphoshikimate = chorismate + phosphate. It participates in metabolic intermediate biosynthesis; chorismate biosynthesis; chorismate from D-erythrose 4-phosphate and phosphoenolpyruvate: step 7/7. Its function is as follows. Catalyzes the anti-1,4-elimination of the C-3 phosphate and the C-6 proR hydrogen from 5-enolpyruvylshikimate-3-phosphate (EPSP) to yield chorismate, which is the branch point compound that serves as the starting substrate for the three terminal pathways of aromatic amino acid biosynthesis. This reaction introduces a second double bond into the aromatic ring system. The sequence is that of Chorismate synthase from Staphylococcus aureus.